The sequence spans 121 residues: Basic phospholipase A2 homolog piratoxin-1 (121 aa).

Intrachain disulfides connect cysteine 26–cysteine 115, cysteine 28–cysteine 44, cysteine 43–cysteine 95, cysteine 49–cysteine 121, cysteine 50–cysteine 88, cysteine 57–cysteine 81, and cysteine 75–cysteine 86. An important for membrane-damaging activities in eukaryotes and bacteria; heparin-binding region spans residues 105–117 (KLYRYHLKPFCKK).

This sequence belongs to the phospholipase A2 family. Group II subfamily. K49 sub-subfamily. In terms of assembly, homodimer; non-covalently linked. In terms of tissue distribution, expressed by the venom gland.

It localises to the secreted. Its activity is regulated as follows. Rosmarinic acid inhibits the myotoxic activity. Bromophenacyl bromide (BPB) inhibits the myotoxic activity through a covalent binding. Caffeic acid and aristolochic acid, two plant compounds used in folk medicine used to treat envenomation, inhibit the myotoxic activity. Its function is as follows. Snake venom phospholipase A2 (PLA2) homolog that lacks enzymatic activity. Is myotoxic and displays edema-inducing activities. Induces neuromuscular blockage. A model of myotoxic mechanism has been proposed: an apo Lys49-PLA2 is activated by the entrance of a hydrophobic molecule (e.g. fatty acid) at the hydrophobic channel of the protein leading to a reorientation of a monomer. This reorientation causes a transition between 'inactive' to 'active' states, causing alignment of C-terminal and membrane-docking sites (MDoS) side-by-side and putting the membrane-disruption sites (MDiS) in the same plane, exposed to solvent and in a symmetric position for both monomers. The MDoS region stabilizes the toxin on membrane by the interaction of charged residues with phospholipid head groups. Subsequently, the MDiS region destabilizes the membrane with penetration of hydrophobic residues. This insertion causes a disorganization of the membrane, allowing an uncontrolled influx of ions (i.e. calcium and sodium), and eventually triggering irreversible intracellular alterations and cell death. This Bothrops pirajai (Piraja's lancehead) protein is Basic phospholipase A2 homolog piratoxin-1.